Reading from the N-terminus, the 295-residue chain is Protoheme IX farnesyltransferase (295 aa).

Transmembrane regions (helical) follow at residues 24-43, 47-69, 94-114, 117-137, 144-164, 171-191, 216-236, 241-261, and 272-292; these read IMYLVVFTAVAGMVAAPGSI, LALISLICIALGSGSAGAINMWY, SALEFGVTIGVLSVFIMAIAV, ISAILLAIGILFYIFIYTIWL, NIVIGGASGAFPPVIGWAVVT, GFVLFLIIFMWTPPHFWALSL, KYILVYSVLLVLTSLLPALFL, FYLGMAIFGGCIFIWHAVSIM, and MFSYSISYLFFLFASIILCSI.

The protein belongs to the UbiA prenyltransferase family. Protoheme IX farnesyltransferase subfamily.

Its subcellular location is the cell membrane. The catalysed reaction is heme b + (2E,6E)-farnesyl diphosphate + H2O = Fe(II)-heme o + diphosphate. It participates in porphyrin-containing compound metabolism; heme O biosynthesis; heme O from protoheme: step 1/1. Converts heme B (protoheme IX) to heme O by substitution of the vinyl group on carbon 2 of heme B porphyrin ring with a hydroxyethyl farnesyl side group. The sequence is that of Protoheme IX farnesyltransferase from Wolbachia sp. subsp. Brugia malayi (strain TRS).